The primary structure comprises 372 residues: N-methyl-L-tryptophan oxidase (372 aa).

FAD is bound at residue 4–34 (DLIIIGSGSVGAAAGYYATRAGLNVLMTDAH). Position 308 is an S-8alpha-FAD cysteine (Cys308).

It belongs to the MSOX/MTOX family. MTOX subfamily. As to quaternary structure, monomer. FAD serves as cofactor.

It carries out the reaction N(alpha)-methyl-L-tryptophan + O2 + H2O = L-tryptophan + formaldehyde + H2O2. In terms of biological role, catalyzes the oxidative demethylation of N-methyl-L-tryptophan. In Escherichia coli O139:H28 (strain E24377A / ETEC), this protein is N-methyl-L-tryptophan oxidase.